Here is a 162-residue protein sequence, read N- to C-terminus: Transcription antitermination protein RfaH (162 aa).

Belongs to the RfaH family. In terms of assembly, interacts with both the nontemplate DNA and the RNA polymerase (RNAP). Monomer in solution.

Its function is as follows. Enhances distal genes transcription elongation in a specialized subset of operons that encode extracytoplasmic components. RfaH is recruited into a multi-component RNA polymerase complex by the ops element, which is a short conserved DNA sequence located downstream of the main promoter of these operons. Once bound, RfaH suppresses pausing and inhibits Rho-dependent and intrinsic termination at a subset of sites. Termination signals are bypassed, which allows complete synthesis of long RNA chains. Enhances expression of several operons involved in synthesis of lipopolysaccharides, exopolysaccharides, hemolysin, and sex factor. Also negatively controls expression and surface presentation of AG43 and possibly another AG43-independent factor that mediates cell-cell interactions and biofilm formation. The sequence is that of Transcription antitermination protein RfaH from Escherichia coli (strain K12).